Reading from the N-terminus, the 431-residue chain is MDTVLMATTPPIRCLHASIPTVFRSPAIYQVSCRSSQLFSYRSTTMMSMCFLRRSDLRSRFLSTPKTTSPMRRPRFSVGASTEESSIPSNRNLIVANSVVIVALAVANRVLYKLALVPMKQYPFFMAQLTTFGYVLIYFTILYTRRRLGIVTNEMMDVPKWRFAIIGFLEALGVATGMAAAAMLPGPVIPILNQTYLVWQLLFALLILGRRFLLNQIAGCLLVAVGVVVAVSSGSGADTTLSGIGFLWPAVLVASAAFQAGASIIKEFVFNDAAKRLEGKSLDIFVVNSFGSGFQALFVFLLLPFLSNLKGIPFASLPSYLKDGAGCFFNTGAKISGCDGAPILPLLYISTNLAFNISLLHLVKISSAIVSSLTMMLSVPLAVYIMSKPLPYLPGGSSLSSNFTMGCIVLVLGLLLYNIPTTPTKQHTKTS.

The transit peptide at 1–79 directs the protein to the chloroplast; sequence MDTVLMATTP…PMRRPRFSVG (79 aa). Transmembrane regions (helical) follow at residues 99–119, 122–142, 163–183, 188–208, 212–232, 244–264, 284–304, 343–363, 365–385, and 403–423; these read VVIVALAVANRVLYKLALVPM, YPFFMAQLTTFGYVLIYFTIL, FAIIGFLEALGVATGMAAAAM, VIPILNQTYLVWQLLFALLIL, FLLNQIAGCLLVAVGVVVAVS, IGFLWPAVLVASAAFQAGASI, IFVVNSFGSGFQALFVFLLLP, ILPLLYISTNLAFNISLLHLV, ISSAIVSSLTMMLSVPLAVYI, and FTMGCIVLVLGLLLYNIPTTP.

Belongs to the CRT-like transporter family.

It is found in the plastid. It localises to the chloroplast membrane. Functionally, involved in thiol transport from the plastid to the cytosol. Transports probably both glutathione (GSH) and its precursor, gamma-glutamylcysteine (gamma-EC). The protein is Protein CLT2, chloroplastic of Arabidopsis thaliana (Mouse-ear cress).